The following is a 249-amino-acid chain: Metallo-beta-lactamase type 2 (249 aa).

The N-terminal stretch at 1–22 (MMKKMKWALVLALGLTGLNAFG) is a signal peptide. Residues His-98, His-100, Asp-102, His-161, and Cys-180 each contribute to the Zn(2+) site. Lys-183 lines the substrate pocket. Residue His-222 participates in Zn(2+) binding.

It belongs to the metallo-beta-lactamase superfamily. Class-B beta-lactamase family. As to quaternary structure, monomer. Zn(2+) serves as cofactor.

Its subcellular location is the periplasm. The enzyme catalyses a beta-lactam + H2O = a substituted beta-amino acid. Functionally, confers resistance to the different beta-lactams antibiotics (penicillin, cephalosporin and carbapenem) via the hydrolysis of the beta-lactam ring. This Elizabethkingia meningoseptica (Chryseobacterium meningosepticum) protein is Metallo-beta-lactamase type 2 (blaB4).